A 411-amino-acid chain; its full sequence is Anthranilate synthase component 1 (411 aa).

Residues Ser27 and 203-205 (PYM) each bind L-tryptophan. 237 to 238 (GT) serves as a coordination point for chorismate. A Mg(2+)-binding site is contributed by Glu262. Residues Tyr350, Arg369, 382-384 (GAG), and Gly384 each bind chorismate. Glu397 contributes to the Mg(2+) binding site.

Belongs to the anthranilate synthase component I family. In terms of assembly, heterotetramer consisting of two non-identical subunits: a beta subunit (TrpG) and a large alpha subunit (TrpE). Requires Mg(2+) as cofactor.

The enzyme catalyses chorismate + L-glutamine = anthranilate + pyruvate + L-glutamate + H(+). It functions in the pathway amino-acid biosynthesis; L-tryptophan biosynthesis; L-tryptophan from chorismate: step 1/5. Feedback inhibited by tryptophan. In terms of biological role, part of a heterotetrameric complex that catalyzes the two-step biosynthesis of anthranilate, an intermediate in the biosynthesis of L-tryptophan. In the first step, the glutamine-binding beta subunit (TrpG) of anthranilate synthase (AS) provides the glutamine amidotransferase activity which generates ammonia as a substrate that, along with chorismate, is used in the second step, catalyzed by the large alpha subunit of AS (TrpE) to produce anthranilate. In the absence of TrpG, TrpE can synthesize anthranilate directly from chorismate and high concentrations of ammonia. This chain is Anthranilate synthase component 1 (trpE), found in Archaeoglobus fulgidus (strain ATCC 49558 / DSM 4304 / JCM 9628 / NBRC 100126 / VC-16).